The primary structure comprises 552 residues: Urocanate hydratase (552 aa).

NAD(+)-binding positions include 50–51 (GG), Gln-128, 174–176 (GMG), Glu-194, Arg-199, 261–265 (QTSAH), 271–272 (YI), and Tyr-320. Residue Cys-408 is part of the active site. Gly-490 serves as a coordination point for NAD(+).

Belongs to the urocanase family. NAD(+) is required as a cofactor.

It is found in the cytoplasm. The catalysed reaction is 4-imidazolone-5-propanoate = trans-urocanate + H2O. It participates in amino-acid degradation; L-histidine degradation into L-glutamate; N-formimidoyl-L-glutamate from L-histidine: step 2/3. In terms of biological role, catalyzes the conversion of urocanate to 4-imidazolone-5-propionate. The protein is Urocanate hydratase of Bdellovibrio bacteriovorus (strain ATCC 15356 / DSM 50701 / NCIMB 9529 / HD100).